Consider the following 86-residue polypeptide: Apolipoprotein C-I (86 aa).

The signal sequence occupies residues 1-26 (MRLFLSLPVLVVALLTILEGPGPAQG).

The protein belongs to the apolipoprotein C1 family.

It localises to the secreted. Inhibitor of lipoprotein binding to the low density lipoprotein (LDL) receptor, LDL receptor-related protein, and very low density lipoprotein (VLDL) receptor. Associates with high density lipoproteins (HDL) and the triacylglycerol-rich lipoproteins in the plasma and makes up about 10% of the protein of the VLDL and 2% of that of HDL. Appears to interfere directly with fatty acid uptake and is also the major plasma inhibitor of cholesteryl ester transfer protein (CETP). Binds free fatty acids and reduces their intracellular esterification. Modulates the interaction of APOE with beta-migrating VLDL and inhibits binding of beta-VLDL to the LDL receptor-related protein. In Plecturocebus moloch (Dusky titi monkey), this protein is Apolipoprotein C-I (APOC1).